The chain runs to 1192 residues: Reticulon-4 (1192 aa).

M1 carries the post-translational modification N-acetylmethionine. Residues 1–204 are disordered; sequence MEDLDQSPLV…ASEPVIRSSA (204 aa). Residues 1-1018 lie on the Cytoplasmic side of the membrane; sequence MEDLDQSPLV…LYWRDIKKTG (1018 aa). A phosphoserine mark is found at S7 and S15. Residues 31-53 are compositionally biased toward acidic residues; the sequence is PEDEEEEEEEEEEDEDEDLEELE. The span at 65–77 shows a compositional bias: low complexity; sequence AAPVPTAPAAGAP. A compositionally biased stretch (pro residues) spans 87–101; the sequence is PPAPRGPLPAAPPVA. At S107 the chain carries Phosphoserine. Positions 110–132 are enriched in low complexity; that stretch reads PSPVSSTVPAPSPLSAAAVSPSK. Over residues 141-150 the composition is skewed to pro residues; that stretch reads ARPPPPPPAS. At S152 the chain carries Phosphoserine. Over residues 159 to 173 the composition is skewed to pro residues; that stretch reads WTPPAPAPAAPPSTP. A phosphoserine mark is found at S181, S182, S184, S361, and S446. Positions 427–458 are disordered; the sequence is DSLEQTNHEKDSESSNDDTSFPSTPEGIKDRS. T450 carries the post-translational modification Phosphothreonine. S511 bears the Phosphoserine mark. Over residues 722-734 the composition is skewed to basic and acidic residues; that stretch reads AKVEQPVPDHSEL. The segment at 722-762 is disordered; that stretch reads AKVEQPVPDHSELVEDSSPDSEPVDLFSDDSIPDVPQKQDE. Residues 735–753 are compositionally biased toward acidic residues; that stretch reads VEDSSPDSEPVDLFSDDSI. At S749 the chain carries Phosphoserine. Residue T858 is modified to Phosphothreonine. Residues S881 and S991 each carry the phosphoserine modification. The 188-residue stretch at 1005–1192 folds into the Reticulon domain; sequence VVDLLYWRDI…KIPGLKRKAE (188 aa). The chain crosses the membrane as a helical span at residues 1019-1039; the sequence is VVFGASLFLLLSLTVFSIVSV. Residues 1040 to 1133 are Lumenal-facing; it reads TAYIALALLS…LMWVFTYVGA (94 aa). An N6-acetyllysine modification is found at K1104. The chain crosses the membrane as a helical span at residues 1134-1154; that stretch reads LFNGLTLLILALISLFSVPVI. The Cytoplasmic portion of the chain corresponds to 1155-1192; that stretch reads YERHQAQIDHYLGLANKNVKDAMAKIQAKIPGLKRKAE.

Binds to RTN4R. Interacts with ATL1. Interacts with TMEM170A. Interacts with RTN4IP1. In terms of assembly, interacts in trans with CNTNAP1. Interacts with REEP5. Interacts with synaptic plasticity regulator PANTS; the interaction results in enhanced RTN4-mediated inhibition of AMPA receptor clustering. Interacts with GPR50. As to quaternary structure, homodimer. Interacts with BAD/Bcl-xl and BCL2. Interact with RTN3. Interacts with NGBR. Interacts with SPTLC1. Interacts with GRAMD4. Interacts with CDH5. Interacts with BACE1 and BACE2. Interacts with REEP5. Interacts with RETREG3. Interacts with BACE1 and BACE2. Interacts with TMEM33. Isoform A: is specifically expressed in brain and testis and weakly in heart and skeletal muscle. Isoform B: widely expressed except for the liver. Highly expressed in endothelial cells and vascular smooth muscle cells, including blood vessels and mesenteric arteries. Isoform C: is expressed in brain, skeletal muscle and adipocytes. Isoform D is testis-specific.

It localises to the endoplasmic reticulum membrane. The protein resides in the cell membrane. Its subcellular location is the synapse. It is found in the cell junction. Functionally, required to induce the formation and stabilization of endoplasmic reticulum (ER) tubules. They regulate membrane morphogenesis in the ER by promoting tubular ER production. They influence nuclear envelope expansion, nuclear pore complex formation and proper localization of inner nuclear membrane proteins. However each isoform have specific functions mainly depending on their tissue expression specificities. Its function is as follows. Developmental neurite growth regulatory factor with a role as a negative regulator of axon-axon adhesion and growth, and as a facilitator of neurite branching. Regulates neurite fasciculation, branching and extension in the developing nervous system. Involved in down-regulation of growth, stabilization of wiring and restriction of plasticity in the adult CNS. Regulates the radial migration of cortical neurons via an RTN4R-LINGO1 containing receptor complex. Acts as a negative regulator of central nervous system angiogenesis. Inhibits spreading, migration and sprouting of primary brain microvascular endothelial cells (MVECs). Also induces the retraction of MVECs lamellipodia and filopodia in a ROCK pathway-dependent manner. Mainly function in endothelial cells and vascular smooth muscle cells, is also involved in immune system regulation. Modulator of vascular remodeling, promotes the migration of endothelial cells but inhibits the migration of vascular smooth muscle cells. Regulates endothelial sphingolipid biosynthesis with direct effects on vascular function and blood pressure. Inhibits serine palmitoyltransferase, SPTLC1, the rate-limiting enzyme of the novo sphingolipid biosynthetic pathway, thereby controlling production of endothelial sphingosine-1-phosphate (S1P). Required to promote macrophage homing and functions such as cytokine/chemokine gene expression involved in angiogenesis, arteriogenesis and tissue repair. Mediates ICAM1 induced transendothelial migration of leukocytes such as monocytes and neutrophils and acute inflammation. Necessary for immune responses triggered by nucleic acid sensing TLRs, such as TLR9, is required for proper TLR9 location to endolysosomes. Also involved in immune response to LPS. Plays a role in liver regeneration through the modulation of hepatocytes proliferation. Reduces the anti-apoptotic activity of Bcl-xl and Bcl-2. This is likely consecutive to their change in subcellular location, from the mitochondria to the endoplasmic reticulum, after binding and sequestration. With isoform C, inhibits BACE1 activity and amyloid precursor protein processing. In terms of biological role, regulates cardiomyocyte apoptosis upon hypoxic conditions. With isoform B, inhibits BACE1 activity and amyloid precursor protein processing. The chain is Reticulon-4 from Homo sapiens (Human).